Reading from the N-terminus, the 71-residue chain is Small ribosomal subunit protein bS21 (71 aa).

Belongs to the bacterial ribosomal protein bS21 family.

In Thioalkalivibrio sulfidiphilus (strain HL-EbGR7), this protein is Small ribosomal subunit protein bS21.